The primary structure comprises 308 residues: HTH-type transcriptional activator AllS (308 aa).

An HTH lysR-type domain is found at Phe2–Thr59. Residues Phe19–Lys38 constitute a DNA-binding region (H-T-H motif).

The protein belongs to the LysR transcriptional regulatory family.

Its function is as follows. Positive regulator essential for the expression of AllD operon. Binds to the AllD promoter. The sequence is that of HTH-type transcriptional activator AllS (allS) from Escherichia coli O157:H7.